The chain runs to 168 residues: uncharacterized protein (168 aa).

The chain crosses the membrane as a helical span at residues 23–47 (LFARASIIGVALLLSACATVPMASV).

The protein localises to the membrane. This is an uncharacterized protein from Haemophilus influenzae (strain ATCC 51907 / DSM 11121 / KW20 / Rd).